Here is a 236-residue protein sequence, read N- to C-terminus: 7-cyano-7-deazaguanine synthase (236 aa).

Residue 7-17 (CSGGLDSVSLA) participates in ATP binding. Cys185, Cys193, Cys196, and Cys199 together coordinate Zn(2+).

The protein belongs to the QueC family. The cofactor is Zn(2+).

The catalysed reaction is 7-carboxy-7-deazaguanine + NH4(+) + ATP = 7-cyano-7-deazaguanine + ADP + phosphate + H2O + H(+). It functions in the pathway purine metabolism; 7-cyano-7-deazaguanine biosynthesis. Functionally, catalyzes the ATP-dependent conversion of 7-carboxy-7-deazaguanine (CDG) to 7-cyano-7-deazaguanine (preQ(0)). The protein is 7-cyano-7-deazaguanine synthase of Rhizobium etli (strain ATCC 51251 / DSM 11541 / JCM 21823 / NBRC 15573 / CFN 42).